A 578-amino-acid chain; its full sequence is Tetratricopeptide repeat protein 39A (578 aa).

TPR repeat units lie at residues 280–313, 470–503, and 511–544; these read AIFL…QQHW, CLVK…EKKI, and PNAL…YKNY.

It belongs to the TTC39 family.

The protein is Tetratricopeptide repeat protein 39A (Ttc39a) of Mus musculus (Mouse).